A 424-amino-acid chain; its full sequence is Serine/threonine-protein kinase H1 (424 aa).

Residue Gly2 is the site of N-myristoyl glycine attachment. Cys3 carries S-palmitoyl cysteine lipidation. The segment at 59–79 is disordered; sequence APPCPGVPNTGHTAPPSEPPR. Positions 98-355 constitute a Protein kinase domain; the sequence is YDIKALIGRG…ALQALRHPWV (258 aa). Residues 104–112 and Lys127 each bind ATP; that span reads IGRGSFSRV. Residue Asp218 is the Proton acceptor of the active site. The segment at 378–408 is disordered; the sequence is RASSRCQSTKSSQSTRSSRSTRSNKSRRVRE. Phosphoserine; by autocatalysis is present on residues Ser380 and Ser381. Residues 381-398 show a composition bias toward low complexity; the sequence is SRCQSTKSSQSTRSSRST.

The protein belongs to the protein kinase superfamily. CAMK Ser/Thr protein kinase family. Homodimer. Autophosphorylated on serine residues. Post-translationally, myristoylated. Required for membrane association. Prerequisite for palmitoylation to occur. In terms of processing, palmitoylated.

It localises to the golgi apparatus. The protein resides in the cytoplasm. Its subcellular location is the cytoskeleton. The protein localises to the microtubule organizing center. It is found in the centrosome. It localises to the nucleus speckle. The protein resides in the endoplasmic reticulum membrane. Its subcellular location is the cell membrane. It catalyses the reaction L-seryl-[protein] + ATP = O-phospho-L-seryl-[protein] + ADP + H(+). It carries out the reaction L-threonyl-[protein] + ATP = O-phospho-L-threonyl-[protein] + ADP + H(+). Its activity is regulated as follows. Activity depends on Ca(2+) concentration. Its function is as follows. Serine/threonine protein kinase that may be involved in the regulation of pre-mRNA processing. It may phosphorylate components of nuclear splice factor compartments (SFC), such as non-snRNP splicing factors containing a serine/arginine-rich domain (SR proteins). Reversible phosphorylation of SR proteins may cause their release into the nucleoplasm and change their local concentration, thereby influencing alternative splicing. The chain is Serine/threonine-protein kinase H1 (Pskh1) from Mus musculus (Mouse).